A 189-amino-acid polypeptide reads, in one-letter code: Parkinson disease protein 7 homolog (189 aa).

Ala2 is subject to N-acetylalanine; in Protein/nucleic acid deglycase DJ-1, N-terminally processed. S-palmitoyl cysteine attachment occurs at residues Cys46 and Cys53. A Phosphotyrosine modification is found at Tyr67. Cys106 serves as the catalytic Nucleophile. At Cys106 the chain carries Cysteine sulfinic acid (-SO2H); alternate. Cys106 carries S-palmitoyl cysteine; alternate lipidation. Residue His126 is part of the active site. Residue Lys130 forms a Glycyl lysine isopeptide (Lys-Gly) (interchain with G-Cter in SUMO) linkage. Lys148 bears the N6-acetyllysine mark. The residue at position 182 (Lys182) is an N6-succinyllysine.

It belongs to the peptidase C56 family. As to quaternary structure, homodimer. Binds EFCAB6/DJBP and PIAS2. Part of a ternary complex containing PARK7, EFCAB6/DJBP and AR. Interacts (via N-terminus) with OTUD7B. Interacts with BBS1, HIPK1, CLCF1 and MTERF. Forms a complex with PINK1 and PRKN. Interacts (via C-terminus) with NCF1; the interaction is enhanced by LPS and modulates NCF1 phosphorylation and membrane translocation. Interacts with NENF. The cofactor is Deglycase activity does not require glutathione as a cofactor, however, glycated glutathione constitutes a PARK7 substrate.. Sumoylated on Lys-130 by PIAS2 or PIAS4; which is essential for cell-growth promoting activity and transforming activity. Post-translationally, undergoes cleavage of a C-terminal peptide and subsequent activation of protease activity in response to oxidative stress. As to expression, detected in liver, heart, spleen and testis (at protein level). Detected in liver, heart, spleen, kidney, epididymidis, vas deferens, sperm cells and testis.

It is found in the cell membrane. Its subcellular location is the cytoplasm. The protein localises to the nucleus. It localises to the membrane raft. The protein resides in the mitochondrion. It is found in the endoplasmic reticulum. It carries out the reaction N(omega)-(1-hydroxy-2-oxopropyl)-L-arginyl-[protein] + H2O = lactate + L-arginyl-[protein] + H(+). The catalysed reaction is N(6)-(1-hydroxy-2-oxopropyl)-L-lysyl-[protein] + H2O = lactate + L-lysyl-[protein] + H(+). It catalyses the reaction S-(1-hydroxy-2-oxopropyl)-L-cysteinyl-[protein] + H2O = lactate + L-cysteinyl-[protein] + H(+). The enzyme catalyses N(omega)-(1-hydroxy-2-oxoethyl)-L-arginyl-[protein] + H2O = L-arginyl-[protein] + glycolate + H(+). It carries out the reaction N(6)-(1-hydroxy-2-oxoethyl)-L-lysyl-[protein] + H2O = glycolate + L-lysyl-[protein] + H(+). The catalysed reaction is S-(1-hydroxy-2-oxoethyl)-L-cysteinyl-[protein] + H2O = glycolate + L-cysteinyl-[protein] + H(+). It catalyses the reaction N(2)-(1-hydroxy-2-oxopropyl)-dGTP + H2O = lactate + dGTP + H(+). The enzyme catalyses N(2)-(1-hydroxy-2-oxopropyl)-GTP + H2O = lactate + GTP + H(+). It carries out the reaction N(2)-(1-hydroxy-2-oxopropyl)-GDP + H2O = lactate + GDP + H(+). The catalysed reaction is N(2)-(1-hydroxy-2-oxopropyl)-GMP + H2O = lactate + GMP + H(+). It catalyses the reaction N(2)-(1-hydroxy-2-oxoethyl)-dGTP + H2O = dGTP + glycolate + H(+). The enzyme catalyses N(2)-(1-hydroxy-2-oxoethyl)-GTP + H2O = glycolate + GTP + H(+). It carries out the reaction N(2)-(1-hydroxy-2-oxoethyl)-GDP + H2O = glycolate + GDP + H(+). The catalysed reaction is N(2)-(1-hydroxy-2-oxoethyl)-GMP + H2O = glycolate + GMP + H(+). It catalyses the reaction an N(2)-(1-hydroxy-2-oxopropyl)-guanosine in RNA + H2O = a guanosine in RNA + lactate + H(+). The enzyme catalyses an N(2)-(1-hydroxy-2-oxopropyl)-2'-deoxyguanosine in DNA + H2O = a 2'-deoxyguanosine in DNA + lactate + H(+). It carries out the reaction an N(2)-(1-hydroxy-2-oxoethyl)-guanosine in RNA + H2O = a guanosine in RNA + glycolate + H(+). The catalysed reaction is an N(2)-(1-hydroxy-2-oxoethyl)-2'-deoxyguanosine in DNA + H2O = a 2'-deoxyguanosine in DNA + glycolate + H(+). Functionally, multifunctional protein with controversial molecular function which plays an important role in cell protection against oxidative stress and cell death acting as oxidative stress sensor and redox-sensitive chaperone and protease. It is involved in neuroprotective mechanisms like the stabilization of NFE2L2 and PINK1 proteins, male fertility as a positive regulator of androgen signaling pathway as well as cell growth and transformation through, for instance, the modulation of NF-kappa-B signaling pathway. Has been described as a protein and nucleotide deglycase that catalyzes the deglycation of the Maillard adducts formed between amino groups of proteins or nucleotides and reactive carbonyl groups of glyoxals. But this function is rebuted by other works. As a protein deglycase, repairs methylglyoxal- and glyoxal-glycated proteins, and releases repaired proteins and lactate or glycolate, respectively. Deglycates cysteine, arginine and lysine residues in proteins, and thus reactivates these proteins by reversing glycation by glyoxals. Acts on early glycation intermediates (hemithioacetals and aminocarbinols), preventing the formation of advanced glycation endproducts (AGE) that cause irreversible damage. Also functions as a nucleotide deglycase able to repair glycated guanine in the free nucleotide pool (GTP, GDP, GMP, dGTP) and in DNA and RNA. Is thus involved in a major nucleotide repair system named guanine glycation repair (GG repair), dedicated to reversing methylglyoxal and glyoxal damage via nucleotide sanitization and direct nucleic acid repair. Protects histones from adduction by methylglyoxal, controls the levels of methylglyoxal-derived argininine modifications on chromatin. Able to remove the glycations and restore histone 3, histone glycation disrupts both local and global chromatin architecture by altering histone-DNA interactions as well as histone acetylation and ubiquitination levels. Displays a very low glyoxalase activity that may reflect its deglycase activity. Eliminates hydrogen peroxide and protects cells against hydrogen peroxide-induced cell death. Required for correct mitochondrial morphology and function as well as for autophagy of dysfunctional mitochondria. Plays a role in regulating expression or stability of the mitochondrial uncoupling proteins SLC25A14 and SLC25A27 in dopaminergic neurons of the substantia nigra pars compacta and attenuates the oxidative stress induced by calcium entry into the neurons via L-type channels during pacemaking. Regulates astrocyte inflammatory responses, may modulate lipid rafts-dependent endocytosis in astrocytes and neuronal cells. In pancreatic islets, involved in the maintenance of mitochondrial reactive oxygen species (ROS) levels and glucose homeostasis in an age- and diet dependent manner. Protects pancreatic beta cells from cell death induced by inflammatory and cytotoxic setting. Binds to a number of mRNAs containing multiple copies of GG or CC motifs and partially inhibits their translation but dissociates following oxidative stress. Metal-binding protein able to bind copper as well as toxic mercury ions, enhances the cell protection mechanism against induced metal toxicity. In macrophages, interacts with the NADPH oxidase subunit NCF1 to direct NADPH oxidase-dependent ROS production, and protects against sepsis. The polypeptide is Parkinson disease protein 7 homolog (PARK7) (Mesocricetus auratus (Golden hamster)).